Reading from the N-terminus, the 261-residue chain is Indole-3-glycerol phosphate synthase (261 aa).

It belongs to the TrpC family.

The catalysed reaction is 1-(2-carboxyphenylamino)-1-deoxy-D-ribulose 5-phosphate + H(+) = (1S,2R)-1-C-(indol-3-yl)glycerol 3-phosphate + CO2 + H2O. The protein operates within amino-acid biosynthesis; L-tryptophan biosynthesis; L-tryptophan from chorismate: step 4/5. The sequence is that of Indole-3-glycerol phosphate synthase from Burkholderia pseudomallei (strain 1106a).